Here is a 428-residue protein sequence, read N- to C-terminus: MRVVVLGSGVVGVTSAYYLARAGHEVTVIDREAGPALETSFANAGQISPGYAAPWAAPGVPLKAVKWMFQKHAPLAIRLDGTQFQLQWMWQMLQNCTSARYAVNKGRMVRLAEYSRDCLQALRAETGIQYEGRTGGTLQLFRTQQQLDGAAKDIAVLEEANVPYELLMPADLARAEPALAATSHKLTGGLRLPGDETGDCQLFTTRLAALAEQLGVKFRYNTPIDALAMEGGRIAGVKCGNEMVRADNFVVALGSYSTQFLSGLVKIPVYPLKGYSITAPIVDAKSAPVSTVLDETYKIAITRFDDRIRVGGMAEIVGFDKKLKQARRETLEMCVNDLFPGGGDTSKATFWTGLRPMTPDGTPIVGRTPVSNLFLNTGHGTLGWTMSCGSGQLLADLISGKRPAIQSGDLSVHRYLGETAGQTRPAYA.

3-17 (VVVLGSGVVGVTSAY) contributes to the FAD binding site.

It belongs to the DadA oxidoreductase family. FAD serves as cofactor.

The catalysed reaction is a D-alpha-amino acid + A + H2O = a 2-oxocarboxylate + AH2 + NH4(+). It functions in the pathway amino-acid degradation; D-alanine degradation; NH(3) and pyruvate from D-alanine: step 1/1. Oxidative deamination of D-amino acids. The protein is D-amino acid dehydrogenase of Paraburkholderia phymatum (strain DSM 17167 / CIP 108236 / LMG 21445 / STM815) (Burkholderia phymatum).